The primary structure comprises 810 residues: Volume-regulated anion channel subunit LRRC8A (810 aa).

An N-acetylmethionine modification is found at Met1. The Cytoplasmic segment spans residues 1–22; that stretch reads MIPVTELRYFADTQPAYRILKP. Residues 23–47 form a helical membrane-spanning segment; that stretch reads WWDVFTDYISIVMLMIAVFGGTLQV. At 48–123 the chain is on the extracellular side; it reads TQDKMICLPC…YENRLHWFAK (76 aa). Disulfide bonds link Cys54–Cys310, Cys57–Cys65, and Cys113–Cys295. Residues Asn66 and Asn83 are each glycosylated (N-linked (GlcNAc...) asparagine). Residues 124–142 form a helical membrane-spanning segment; the sequence is YFPYLVLLHTLIFLACSNF. The Cytoplasmic portion of the chain corresponds to 143-264; it reads WFKFPRTSSK…EEGDIVYRLY (122 aa). Thr200 bears the Phosphothreonine mark. At Ser202 the chain carries Phosphoserine. Position 215 is a phosphothreonine (Thr215). A Phosphoserine modification is found at Ser217. The helical transmembrane segment at 265 to 286 threads the bilayer; the sequence is MRQTIIKVIKFFLIICYTVYYV. The Extracellular portion of the chain corresponds to 287-316; it reads HNIKFDVDCTVDIESLTGYRTYRCAHPLAT. Residues 317–341 traverse the membrane as a helical segment; the sequence is LFKILASFYISLVIFYGLICMYTLW. The Cytoplasmic portion of the chain corresponds to 342 to 810; the sequence is WMLRRSLKKY…RLWRADKEQA (469 aa). 17 LRR repeats span residues 399-422, 423-445, 447-468, 469-492, 493-515, 518-542, 543-565, 567-589, 590-613, 614-637, 639-661, 662-684, 686-707, 708-730, 732-753, 754-776, and 778-801; these read ENKLRQLNLNNEWTLDKLRQRLTK, NAQDKLELHLFMLSGIPDTVFDL, ELEVLKLELIPDVTIPPSIAQL, TGLKELWLYHTAAKIEAPALAFLR, ENLRALHIKFTDIKEIPLWIYSL, LEELHLTGNLSAENNRYIVIDGLRE, LKRLKVLRLKSNLSKLPQVVTDV, VHLQKLSINNEGTKLIVLNSLKK, MVNLTELELIRCDLERIPHSIFSL, HNLQEIDLKDNNLKTIEEIISFQH, HRLTCLKLWYNHIAYIPIQIGNL, TNLERLYLNRNKIEKIPTQLFYC, KLRYLDLSHNNLTLLPADIGLL, QNLQNLAVTANRIEALPPELFQC, KLRALHLGNNVLQSLPSRVGEL, TNLTQIELRGNRLECLPVELGEC, and LLKRSGLVVEEDLFSTLPPEVKER. A Di-leucine motif motif is present at residues 706-707; that stretch reads LL.

The protein belongs to the LRRC8 family. In terms of assembly, heterohexamer; oligomerizes with other LRRC8 proteins (LRRC8B, LRRC8C, LRRC8D and/or LRRC8E) to form a heterohexamer. Can form homohexamers in vitro, but these have lower conductance than heterohexamers. Detected in a channel complex that contains LRRC8A, LRRC8C and LRRC8E. In vivo, the subunit composition may depend primarily on expression levels, and heterooligomeric channels containing various proportions of the different LRRC8 proteins may coexist. Interact with GRB2. Interacts with NOX4; this interaction prevents the ubiquitin-mediated degradation of LRRC8A. N-glycosylated.

It localises to the cell membrane. Its subcellular location is the lysosome membrane. The enzyme catalyses chloride(in) = chloride(out). It catalyses the reaction iodide(out) = iodide(in). It carries out the reaction taurine(out) = taurine(in). The catalysed reaction is L-aspartate(out) = L-aspartate(in). The enzyme catalyses L-glutamate(out) = L-glutamate(in). It catalyses the reaction myo-inositol(out) = myo-inositol(in). It carries out the reaction 2',3'-cGAMP(out) = 2',3'-cGAMP(in). Inhibited by (4-[(2-butyl-6,7-dichloro-2-cyclopentyl-2,3-dihydro-1-oxo-1H-inden-5-yl)oxy]butanoic acid), which plugs the channel like a cork in a bottle by binding in the extracellular selectivity filter and sterically occluding ion conduction. Lipids may block conduction in closed heterohexameric channels. Essential component of the volume-regulated anion channel (VRAC, also named VSOAC channel), an anion channel required to maintain a constant cell volume in response to extracellular or intracellular osmotic changes. The VRAC channel conducts iodide better than chloride and can also conduct organic osmolytes like taurine. Mediates efflux of amino acids, such as aspartate and glutamate, in response to osmotic stress. In complex with LRRC8C or LRRC8E, acts as a transporter of immunoreactive cyclic dinucleotide GMP-AMP (2'-3'-cGAMP), an immune messenger produced in response to DNA virus in the cytosol: mediates both import and export of 2'-3'-cGAMP, thereby promoting transfer of 2'-3'-cGAMP to bystander cells. In contrast, complexes containing LRRC8D inhibit transport of 2'-3'-cGAMP. Required for in vivo channel activity, together with at least one other family member (LRRC8B, LRRC8C, LRRC8D or LRRC8E); channel characteristics depend on the precise subunit composition. Can form functional channels by itself (in vitro). Involved in B-cell development: required for the pro-B cell to pre-B cell transition. Also required for T-cell development. Required for myoblast differentiation: VRAC activity promotes membrane hyperpolarization and regulates insulin-stimulated glucose metabolism and oxygen consumption. Also acts as a regulator of glucose-sensing in pancreatic beta cells: VRAC currents, generated in response to hypotonicity- or glucose-induced beta cell swelling, depolarize cells, thereby causing electrical excitation, leading to increase glucose sensitivity and insulin secretion. Also plays a role in lysosome homeostasis by forming functional lysosomal VRAC channels in response to low cytoplasmic ionic strength condition: lysosomal VRAC channels are necessary for the formation of large lysosome-derived vacuoles, which store and then expel excess water to maintain cytosolic water homeostasis. Acts as a key factor in NLRP3 inflammasome activation by modulating itaconate efflux and mitochondria function. In Rattus norvegicus (Rat), this protein is Volume-regulated anion channel subunit LRRC8A.